The chain runs to 451 residues: UDP-glycosyltransferase 13 (451 aa).

Residue histidine 15 is the Proton acceptor of the active site. Histidine 15 contributes to the an anthocyanidin binding site. Residue aspartate 93 is the Charge relay of the active site. Alanine 326, glutamine 328, histidine 343, tryptophan 346, asparagine 347, serine 348, and glutamate 351 together coordinate UDP-alpha-D-glucose. Alanine 366 serves as a coordination point for an anthocyanidin. 2 residues coordinate UDP-alpha-D-glucose: glutamate 367 and glutamine 368.

The protein belongs to the UDP-glycosyltransferase family. Expressed in roots. Detected in stems and leaves.

It carries out the reaction a 7-hydroxyisoflavone + UDP-alpha-D-glucose = a 7-hydroxyisoflavone 7-O-beta-D-glucoside + UDP + H(+). Isoflavone 7-O-glucosyltransferase converting daidzein to daidzin, genistein to genistin and formononetin to ononin. Shows some activity toward the flavanones liquiritigenin and naringenin, but not toward cyanidin, isoliquiritigenin, apigenin, luteolin, kaempferol, quercetin, daidzin and puerarin. This is UDP-glycosyltransferase 13 from Pueraria montana var. lobata (Kudzu vine).